Consider the following 341-residue polypeptide: Protein BEARSKIN2 (341 aa).

An NAC domain is found at 9 to 160 (VPPGFRFHPT…GWVVCRVFMK (152 aa)). A DNA-binding region spans residues 109-166 (IGMRKTLVFYKGRAPHGQKTDWIMHEYRLEDADDPQANPSEDGWVVCRVFMKKNLFKV).

In terms of tissue distribution, expressed throughout the root cap, in both columella (COL) and lateral root cap (LRC) cells, with higher levels in the COL-adjoining LRC than the upper LRC. Also present at low levels expression in the tips of cotyledons and the cotyledon vasculature, as weel as in vasculature of the first pair of true leaves and at the hydathodes.

It localises to the nucleus. Functionally, transcription activator. Together with BRN1 and SMB, regulates cellular maturation of root cap. Promotes the expression of genes involved in secondary cell walls (SCW) biosynthesis. This Arabidopsis thaliana (Mouse-ear cress) protein is Protein BEARSKIN2 (BRN2).